A 217-amino-acid chain; its full sequence is Thymidylate kinase (217 aa).

14-21 (GNEGSGKT) provides a ligand contact to ATP.

It belongs to the thymidylate kinase family.

The catalysed reaction is dTMP + ATP = dTDP + ADP. Its function is as follows. Phosphorylation of dTMP to form dTDP in both de novo and salvage pathways of dTTP synthesis. The sequence is that of Thymidylate kinase from Orientia tsutsugamushi (strain Ikeda) (Rickettsia tsutsugamushi).